A 358-amino-acid polypeptide reads, in one-letter code: Uroporphyrinogen decarboxylase (358 aa).

Residues 29–33 (RQAGR), Phe48, Asp79, Tyr155, Ser210, and His330 each bind substrate.

The protein belongs to the uroporphyrinogen decarboxylase family. As to quaternary structure, homodimer.

The protein localises to the cytoplasm. It carries out the reaction uroporphyrinogen III + 4 H(+) = coproporphyrinogen III + 4 CO2. Its pathway is porphyrin-containing compound metabolism; protoporphyrin-IX biosynthesis; coproporphyrinogen-III from 5-aminolevulinate: step 4/4. Functionally, catalyzes the decarboxylation of four acetate groups of uroporphyrinogen-III to yield coproporphyrinogen-III. This chain is Uroporphyrinogen decarboxylase, found in Bordetella pertussis (strain Tohama I / ATCC BAA-589 / NCTC 13251).